A 407-amino-acid polypeptide reads, in one-letter code: tRNA (uracil(54)-C(5))-methyltransferase (407 aa).

Positions 61, 67, 70, and 137 each coordinate [4Fe-4S] cluster. Residues Q253, Y279, T284, 300 to 301 (DS), D327, and D341 contribute to the S-adenosyl-L-methionine site. C368 functions as the Nucleophile in the catalytic mechanism. Residue E400 is the Proton acceptor of the active site.

Belongs to the class I-like SAM-binding methyltransferase superfamily. RNA M5U methyltransferase family.

The enzyme catalyses uridine(54) in tRNA + S-adenosyl-L-methionine = 5-methyluridine(54) in tRNA + S-adenosyl-L-homocysteine + H(+). Catalyzes the formation of 5-methyl-uridine at position 54 (m5U54) in tRNA. This is tRNA (uracil(54)-C(5))-methyltransferase from Pyrococcus horikoshii (strain ATCC 700860 / DSM 12428 / JCM 9974 / NBRC 100139 / OT-3).